The sequence spans 383 residues: Heterogeneous nuclear rnp K-like protein 2 (383 aa).

KH domains are found at residues Asn-58–Val-122, Ile-161–Ile-226, and Gln-256–Leu-321. Positions Arg-332–Glu-383 are disordered. Residues Ser-343–Ala-362 are compositionally biased toward low complexity. Positions Asn-363–Glu-376 are enriched in polar residues.

This sequence belongs to the HEK2 family. Binds RNA.

It localises to the cytoplasm. The protein resides in the P-body. The protein localises to the nucleus. It is found in the chromosome. Its subcellular location is the telomere. In terms of biological role, RNA-binding protein involved in the correct localization of transcripts in the cell. RNA localization is a widespread mechanism for achieving localized protein synthesis. Involved in structural and functional organization of telomeric chromatin and regulates silencing at the HMR locus. The polypeptide is Heterogeneous nuclear rnp K-like protein 2 (HEK2) (Kluyveromyces lactis (strain ATCC 8585 / CBS 2359 / DSM 70799 / NBRC 1267 / NRRL Y-1140 / WM37) (Yeast)).